A 286-amino-acid chain; its full sequence is ATP synthase gamma chain (286 aa).

It belongs to the ATPase gamma chain family. F-type ATPases have 2 components, CF(1) - the catalytic core - and CF(0) - the membrane proton channel. CF(1) has five subunits: alpha(3), beta(3), gamma(1), delta(1), epsilon(1). CF(0) has three main subunits: a, b and c.

The protein resides in the cell inner membrane. Functionally, produces ATP from ADP in the presence of a proton gradient across the membrane. The gamma chain is believed to be important in regulating ATPase activity and the flow of protons through the CF(0) complex. In Pseudomonas fluorescens (strain ATCC BAA-477 / NRRL B-23932 / Pf-5), this protein is ATP synthase gamma chain.